Consider the following 304-residue polypeptide: MASMTPAEMARVLGSGLLSFPVTHFRDDLSFDETAYRDNLGRLADYKVSGLFAAGGTGEFFSLTPAEIDRVLRAAVEETRGRTPVIAPAGQGTALAVEMARAAEAAGADGILLLPPYLVGSEQAGLAAHIEAVCRATALGIIVYNRANAQLDERTLAGLCERCPNLVGFKDGVGDVELMTRVYAALGDRLTYIGGLPTAETFALPYLEMGVTTYSSAIFNFLPEWALSFYDSVRRRDRDAVYRELRDFVLPYIAIRNRKRGYAVSIVKAGMSAVGRHAGPVRPPLTELDAAERAELTALIGDRR.

The protein belongs to the DapA family.

The enzyme catalyses 5-dehydro-4-deoxy-D-glucarate + H(+) = 2,5-dioxopentanoate + CO2 + H2O. The protein operates within carbohydrate acid metabolism; D-glucarate degradation; 2,5-dioxopentanoate from D-glucarate: step 2/2. The polypeptide is Probable 5-dehydro-4-deoxyglucarate dehydratase (Methylobacterium radiotolerans (strain ATCC 27329 / DSM 1819 / JCM 2831 / NBRC 15690 / NCIMB 10815 / 0-1)).